Here is a 644-residue protein sequence, read N- to C-terminus: Exoribonuclease 2 (644 aa).

The RNB domain occupies 189–516; the sequence is REDLTSLDFV…NHRLLKAVIK (328 aa). The S1 motif domain maps to 561 to 643; it reads GTRFAAEIVD…ETRSIIARPV (83 aa).

The protein belongs to the RNR ribonuclease family. RNase II subfamily.

It localises to the cytoplasm. It carries out the reaction Exonucleolytic cleavage in the 3'- to 5'-direction to yield nucleoside 5'-phosphates.. Involved in mRNA degradation. Hydrolyzes single-stranded polyribonucleotides processively in the 3' to 5' direction. The polypeptide is Exoribonuclease 2 (Shigella flexneri).